We begin with the raw amino-acid sequence, 469 residues long: Putative arginine/ornithine antiporter (469 aa).

12 helical membrane-spanning segments follow: residues 8–28 (GFWL…IFSL), 44–64 (AWLL…HLSI), 90–110 (AGFT…VAII), 144–164 (LTFA…VASI), 179–199 (VLGF…SLFG), 213–233 (IGIG…FVGI), 254–274 (ITGL…TMGV), 301–321 (VIMA…WILL), 347–367 (SPVI…FSVI), 375–395 (FTFL…VSAI), 417–437 (DGLI…TGTA), and 439–459 (LTTF…YPFV).

Belongs to the amino acid-polyamine-organocation (APC) superfamily. Basic amino acid/polyamine antiporter (APA) (TC 2.A.3.2) family.

It is found in the cell membrane. The enzyme catalyses L-ornithine(in) + L-arginine(out) = L-ornithine(out) + L-arginine(in). Functionally, catalyzes electroneutral exchange between L-arginine and L-ornithine. The protein is Putative arginine/ornithine antiporter (yvsH) of Bacillus subtilis (strain 168).